Reading from the N-terminus, the 113-residue chain is U11-theraphotoxin-Hhn1a (113 aa).

An N-terminal signal peptide occupies residues 1 to 21 (MNTVRVTFLLVFVLAVSLGQA). The propeptide occupies 22 to 74 (DKDENRMEMQEKTEQGRSYLDFAENLLLQKLEELEAKLLEEDSEESRNSRQKR). The tract at residues 61-83 (EEDSEESRNSRQKRCIGEGVPCD) is disordered. Intrachain disulfides connect Cys75–Cys90, Cys82–Cys95, and Cys89–Cys110.

It belongs to the neurotoxin 14 (magi-1) family. 01 (HNTX-16) subfamily. As to expression, expressed by the venom gland.

It is found in the secreted. Probable ion channel inhibitor. The polypeptide is U11-theraphotoxin-Hhn1a (Cyriopagopus hainanus (Chinese bird spider)).